Reading from the N-terminus, the 467-residue chain is Methylenetetrahydrofolate--tRNA-(uracil-5-)-methyltransferase TrmFO (467 aa).

FAD is bound at residue 11 to 16 (GAGLAG).

It belongs to the MnmG family. TrmFO subfamily. FAD is required as a cofactor.

It is found in the cytoplasm. The catalysed reaction is uridine(54) in tRNA + (6R)-5,10-methylene-5,6,7,8-tetrahydrofolate + NADH + H(+) = 5-methyluridine(54) in tRNA + (6S)-5,6,7,8-tetrahydrofolate + NAD(+). It catalyses the reaction uridine(54) in tRNA + (6R)-5,10-methylene-5,6,7,8-tetrahydrofolate + NADPH + H(+) = 5-methyluridine(54) in tRNA + (6S)-5,6,7,8-tetrahydrofolate + NADP(+). Catalyzes the folate-dependent formation of 5-methyl-uridine at position 54 (M-5-U54) in all tRNAs. This chain is Methylenetetrahydrofolate--tRNA-(uracil-5-)-methyltransferase TrmFO, found in Prochlorococcus marinus (strain MIT 9303).